A 391-amino-acid polypeptide reads, in one-letter code: Cytochrome P450 165A3 (391 aa).

The tract at residues 1–22 (MFEEKNALRGTEIHRRERFDPG) is disordered. Heme is bound at residue cysteine 342.

The protein belongs to the cytochrome P450 family. The cofactor is heme.

It participates in antibiotic biosynthesis; vancomycin biosynthesis. Its function is as follows. Involved in the coupling of aromatic side chains of the heptapeptide of vancomycin. The protein is Cytochrome P450 165A3 (cyp165A3) of Amycolatopsis orientalis (Nocardia orientalis).